The chain runs to 333 residues: Ketol-acid reductoisomerase (NAD(P)(+)) (333 aa).

Residues 2–182 (AKIYYDEDAS…GATRAGVIET (181 aa)) form the KARI N-terminal Rossmann domain. Residues 25–28 (YGSQ), S51, and 83–86 (DTVQ) each bind NADP(+). Residue H108 is part of the active site. G134 provides a ligand contact to NADP(+). In terms of domain architecture, KARI C-terminal knotted spans 183–327 (TFREETETDL…KELRQMMPWL (145 aa)). The Mg(2+) site is built by D191, E195, E227, and E231. S252 serves as a coordination point for substrate.

It belongs to the ketol-acid reductoisomerase family. Mg(2+) serves as cofactor.

It catalyses the reaction (2R)-2,3-dihydroxy-3-methylbutanoate + NAD(+) = (2S)-2-acetolactate + NADH + H(+). The catalysed reaction is (2R)-2,3-dihydroxy-3-methylbutanoate + NADP(+) = (2S)-2-acetolactate + NADPH + H(+). It functions in the pathway amino-acid biosynthesis; L-isoleucine biosynthesis; L-isoleucine from 2-oxobutanoate: step 2/4. Its pathway is amino-acid biosynthesis; L-valine biosynthesis; L-valine from pyruvate: step 2/4. In terms of biological role, involved in the biosynthesis of branched-chain amino acids (BCAA). Catalyzes an alkyl-migration followed by a ketol-acid reduction of (S)-2-acetolactate (S2AL) to yield (R)-2,3-dihydroxy-isovalerate. In the isomerase reaction, S2AL is rearranged via a Mg-dependent methyl migration to produce 3-hydroxy-3-methyl-2-ketobutyrate (HMKB). In the reductase reaction, this 2-ketoacid undergoes a metal-dependent reduction by NADPH or NADH to yield (R)-2,3-dihydroxy-isovalerate. The polypeptide is Ketol-acid reductoisomerase (NAD(P)(+)) (Hydrogenobaculum sp. (strain Y04AAS1)).